The following is an 86-amino-acid chain: Putative protein adenylyltransferase MJ1215 (86 aa).

Positions 35-49 match the GSX(10)DXD motif motif; it reads GSYARGEQKETSDID. The Mg(2+) site is built by D47, D49, and D79.

This sequence belongs to the MntA antitoxin family. Probably forms a complex with cognate toxin MJ1216. Mg(2+) is required as a cofactor.

The enzyme catalyses L-tyrosyl-[protein] + ATP = O-(5'-adenylyl)-L-tyrosyl-[protein] + diphosphate. It carries out the reaction O-(5'-adenylyl)-L-tyrosyl-[protein] + ATP = O-[5'-(adenylyl-(5'-&gt;3')-adenylyl)]-L-tyrosyl-[protein] + diphosphate. Probable antitoxin component of a putative type VII toxin-antitoxin (TA) system. Neutralizes cognate toxic MJ1216 by di-AMPylation. This Methanocaldococcus jannaschii (strain ATCC 43067 / DSM 2661 / JAL-1 / JCM 10045 / NBRC 100440) (Methanococcus jannaschii) protein is Putative protein adenylyltransferase MJ1215.